Reading from the N-terminus, the 57-residue chain is uncharacterized protein (57 aa).

This is an uncharacterized protein from Escherichia coli (strain K12).